A 110-amino-acid polypeptide reads, in one-letter code: Small ribosomal subunit protein bS6 (110 aa).

This sequence belongs to the bacterial ribosomal protein bS6 family.

In terms of biological role, binds together with bS18 to 16S ribosomal RNA. In Aquifex aeolicus (strain VF5), this protein is Small ribosomal subunit protein bS6 (rpsF).